Consider the following 212-residue polypeptide: Ribonuclease HII (212 aa).

The 199-residue stretch at 1-199 folds into the RNase H type-2 domain; the sequence is MIGGIDEAGR…VGGRIGLGRN (199 aa). The a divalent metal cation site is built by aspartate 6, glutamate 7, and aspartate 101.

It belongs to the RNase HII family. Requires Mn(2+) as cofactor. Mg(2+) is required as a cofactor.

The protein localises to the cytoplasm. The catalysed reaction is Endonucleolytic cleavage to 5'-phosphomonoester.. Functionally, endonuclease that specifically degrades the RNA of RNA-DNA hybrids. In Pyrobaculum aerophilum (strain ATCC 51768 / DSM 7523 / JCM 9630 / CIP 104966 / NBRC 100827 / IM2), this protein is Ribonuclease HII.